A 354-amino-acid polypeptide reads, in one-letter code: MIRVVVVDDSMSMRTLLERIINGCDGMTCVGAAEDASAAREMIRALDPDVVTLDVEMPGMDGLEFLRRMMLLKPTPTIMVSGRTTSGSDAALRALELGAVDVIAKPLLTRPADLADYARDIAELIRGAAAARVKGGALAAASSAGRERACAHRPRGAKKAGIAATRLSRVIAIGASTGGTEALRTVLQDMSGTPPPILICQHMPEGFTASFAARLDAICGIRVKEAEQGEPLHYGCAYVAPGHSHLSLAATGRLYVCRLEASPPVNRHRPSVDVLFDSVARLAGKRALGAILTGMGKDGAAGLLRMRASGARTFAQDEPSCVVFGMPKEAIAMGAVDEILPLARMGARLSEALQ.

The Response regulatory domain maps to 3-120 (RVVVVDDSMS…PADLADYARD (118 aa)). Aspartate 54 is subject to 4-aspartylphosphate. The CheB-type methylesterase domain maps to 164–354 (ATRLSRVIAI…MGARLSEALQ (191 aa)). Residues serine 176, histidine 202, and aspartate 298 contribute to the active site.

This sequence belongs to the CheB family. In terms of processing, phosphorylated by CheA. Phosphorylation of the N-terminal regulatory domain activates the methylesterase activity.

The protein localises to the cytoplasm. It carries out the reaction [protein]-L-glutamate 5-O-methyl ester + H2O = L-glutamyl-[protein] + methanol + H(+). The enzyme catalyses L-glutaminyl-[protein] + H2O = L-glutamyl-[protein] + NH4(+). Involved in chemotaxis. Part of a chemotaxis signal transduction system that modulates chemotaxis in response to various stimuli. Catalyzes the demethylation of specific methylglutamate residues introduced into the chemoreceptors (methyl-accepting chemotaxis proteins or MCP) by CheR. Also mediates the irreversible deamidation of specific glutamine residues to glutamic acid. The protein is Protein-glutamate methylesterase/protein-glutamine glutaminase 2 of Burkholderia thailandensis (strain ATCC 700388 / DSM 13276 / CCUG 48851 / CIP 106301 / E264).